A 200-amino-acid chain; its full sequence is ATP-dependent Clp protease proteolytic subunit 2 (200 aa).

The Nucleophile role is filled by Ser100.

This sequence belongs to the peptidase S14 family. Fourteen ClpP subunits assemble into 2 heptameric rings which stack back to back to give a disk-like structure with a central cavity, resembling the structure of eukaryotic proteasomes.

It localises to the cytoplasm. The catalysed reaction is Hydrolysis of proteins to small peptides in the presence of ATP and magnesium. alpha-casein is the usual test substrate. In the absence of ATP, only oligopeptides shorter than five residues are hydrolyzed (such as succinyl-Leu-Tyr-|-NHMec, and Leu-Tyr-Leu-|-Tyr-Trp, in which cleavage of the -Tyr-|-Leu- and -Tyr-|-Trp bonds also occurs).. Functionally, cleaves peptides in various proteins in a process that requires ATP hydrolysis. Has a chymotrypsin-like activity. Plays a major role in the degradation of misfolded proteins. The sequence is that of ATP-dependent Clp protease proteolytic subunit 2 from Streptomyces avermitilis (strain ATCC 31267 / DSM 46492 / JCM 5070 / NBRC 14893 / NCIMB 12804 / NRRL 8165 / MA-4680).